The sequence spans 61 residues: U-stichotoxin-Hcr1a (61 aa).

The N-terminal stretch at 1–21 (MKPAIFLMLFVAMFLISEGEG) is a signal peptide. The propeptide occupies 22–31 (FKPKDAPQER). Proline 36 carries the hydroxyproline modification. Disulfide bonds link cysteine 41–cysteine 53 and cysteine 44–cysteine 59.

This sequence belongs to the Hau1a/HC18/HC19 family.

The protein resides in the secreted. It is found in the nematocyst. Toxin that is lethal to crab. Does not produce the typical symptoms associated with sodium channel toxins in crabs, suggesting that it likely does not act on sodium channels. This chain is U-stichotoxin-Hcr1a, found in Radianthus crispa (Leathery sea anemone).